We begin with the raw amino-acid sequence, 542 residues long: Phosphoacetylglucosamine mutase 2 (542 aa).

Residue serine 77 is the Phosphoserine intermediate of the active site. Serine 77 contributes to the Mg(2+) binding site. 2 positions are modified to phosphoserine: serine 77 and serine 82. Mg(2+) is bound by residues aspartate 292, aspartate 294, and aspartate 296. Substrate is bound by residues 385-387 (EAN), 510-514 (RSSGT), and arginine 519.

This sequence belongs to the phosphohexose mutase family. Mg(2+) is required as a cofactor.

The protein localises to the cytoplasm. It localises to the nucleus. It carries out the reaction N-acetyl-alpha-D-glucosamine 1-phosphate = N-acetyl-D-glucosamine 6-phosphate. Its pathway is nucleotide-sugar biosynthesis; UDP-N-acetyl-alpha-D-glucosamine biosynthesis; N-acetyl-alpha-D-glucosamine 1-phosphate from alpha-D-glucosamine 6-phosphate (route I): step 2/2. Catalyzes the conversion of GlcNAc-6-P into GlcNAc-1-P during the synthesis of uridine diphosphate/UDP-GlcNAc, which is a biosynthetic precursor of chitin and also supplies the amino sugars for N-linked oligosaccharides of glycoproteins. The polypeptide is Phosphoacetylglucosamine mutase 2 (Schizosaccharomyces pombe (strain 972 / ATCC 24843) (Fission yeast)).